The primary structure comprises 301 residues: MLASTVTGAPLQEQGRAKVNLTLRVVGRRVDGYHDLESVVAFADCADQLTLVPGPELTLTTTGPLAAACGETSDNLVLKAARLLAESVPGLKLGAFELEKVLPVAAGIGGGSADAAAALRLLARLNGLSLDDPRLQAVALKTGADVPVCVPSRACTMTGVGENLQPLALPVLPCVMINPRVPVATKDVFQALGLKPGDLLVGVTDVLTAPSWPTAGASIGDWVSALDQVKNDLEPPALKVQPIIGTVLDALRASHGVLLARMSGSGATCFAIYGSEADAKAAGAQISADHPEWWVHAGTLS.

Lys18 is a catalytic residue. 103-113 (PVAAGIGGGSA) is an ATP binding site. Asp145 is an active-site residue.

The protein belongs to the GHMP kinase family. IspE subfamily.

It catalyses the reaction 4-CDP-2-C-methyl-D-erythritol + ATP = 4-CDP-2-C-methyl-D-erythritol 2-phosphate + ADP + H(+). It participates in isoprenoid biosynthesis; isopentenyl diphosphate biosynthesis via DXP pathway; isopentenyl diphosphate from 1-deoxy-D-xylulose 5-phosphate: step 3/6. Functionally, catalyzes the phosphorylation of the position 2 hydroxy group of 4-diphosphocytidyl-2C-methyl-D-erythritol. This is 4-diphosphocytidyl-2-C-methyl-D-erythritol kinase from Bradyrhizobium sp. (strain BTAi1 / ATCC BAA-1182).